The following is a 109-amino-acid chain: uncharacterized protein (109 aa).

Residues 12 to 32 (PNILIKGVYIFVLYGMCICIV) traverse the membrane as a helical segment.

The protein resides in the membrane. This is an uncharacterized protein from Saccharomyces cerevisiae (strain ATCC 204508 / S288c) (Baker's yeast).